A 382-amino-acid chain; its full sequence is DNA replication and repair protein RecF (382 aa).

30 to 37 lines the ATP pocket; that stretch reads GPNGHGKS.

It belongs to the RecF family.

The protein resides in the cytoplasm. The RecF protein is involved in DNA metabolism; it is required for DNA replication and normal SOS inducibility. RecF binds preferentially to single-stranded, linear DNA. It also seems to bind ATP. The protein is DNA replication and repair protein RecF of Magnetococcus marinus (strain ATCC BAA-1437 / JCM 17883 / MC-1).